Reading from the N-terminus, the 120-residue chain is Large ribosomal subunit protein bL20 (120 aa).

This sequence belongs to the bacterial ribosomal protein bL20 family.

In terms of biological role, binds directly to 23S ribosomal RNA and is necessary for the in vitro assembly process of the 50S ribosomal subunit. It is not involved in the protein synthesizing functions of that subunit. The protein is Large ribosomal subunit protein bL20 of Mesoplasma florum (strain ATCC 33453 / NBRC 100688 / NCTC 11704 / L1) (Acholeplasma florum).